The primary structure comprises 517 residues: Putative ribose/galactose/methyl galactoside import ATP-binding protein 1 (517 aa).

ABC transporter domains lie at 23 to 258 (LQLQ…VGRP) and 269 to 515 (TPTD…SGRS). 55 to 62 (GENGAGKS) is an ATP binding site.

The protein belongs to the ABC transporter superfamily. Carbohydrate importer 2 (CUT2) (TC 3.A.1.2) family.

Its subcellular location is the cell inner membrane. It carries out the reaction D-ribose(out) + ATP + H2O = D-ribose(in) + ADP + phosphate + H(+). The enzyme catalyses D-galactose(out) + ATP + H2O = D-galactose(in) + ADP + phosphate + H(+). In terms of biological role, part of an ABC transporter complex involved in carbohydrate import. Could be involved in ribose, galactose and/or methyl galactoside import. Responsible for energy coupling to the transport system. The sequence is that of Putative ribose/galactose/methyl galactoside import ATP-binding protein 1 from Burkholderia ambifaria (strain ATCC BAA-244 / DSM 16087 / CCUG 44356 / LMG 19182 / AMMD) (Burkholderia cepacia (strain AMMD)).